Here is a 775-residue protein sequence, read N- to C-terminus: Endothelin-converting enzyme-like 1 (775 aa).

Residues 1–61 lie on the Cytoplasmic side of the membrane; it reads MEAPYSMTAH…LPRWNRREVC (61 aa). A disordered region spans residues 23-51; it reads CGTGGARGTSLPPGFPRSSGRSASGARSG. Low complexity predominate over residues 32–51; it reads SLPPGFPRSSGRSASGARSG. Residues 62 to 82 traverse the membrane as a helical; Signal-anchor for type II membrane protein segment; the sequence is LLSGLVFAAGLCAILAAMLAL. At 83-775 the chain is on the lumenal side; it reads KYLGPGAAGT…MNPVHKCSVW (693 aa). The Peptidase M13 domain occupies 99–775; that stretch reads GCPERKAFAR…MNPVHKCSVW (677 aa). Disulfide bonds link C124/C760, C132/C720, C188/C441, and C649/C772. Residues N255 and N322 are each glycosylated (N-linked (GlcNAc...) asparagine). H612 serves as a coordination point for Zn(2+). Residue E613 is part of the active site. Residue H616 coordinates Zn(2+). A glycan (N-linked (GlcNAc...) asparagine) is linked at N656. E672 provides a ligand contact to Zn(2+). D676 (proton donor) is an active-site residue.

The protein belongs to the peptidase M13 family. It depends on Zn(2+) as a cofactor. As to expression, highly expressed in the CNS, in particular in neurons of the caudate putamen, diagonal band, the paraventricular nucleus of the thalamus, part of the hypothalamus, in cranial motor nuclei, inferior olive, and substantia gelatinosa of the spinal tract trigeminal nucleus. Not detected in cerebral cortex, hippocampus and cerebellum.

It is found in the membrane. May contribute to the degradation of peptide hormones and be involved in the inactivation of neuronal peptides. Cleaves the synthetic substrate Z-Gly-Gly-Leu-pNA and releases pNA. May protect against C2-ceramide-induced apoptosis. The sequence is that of Endothelin-converting enzyme-like 1 (Ecel1) from Rattus norvegicus (Rat).